The primary structure comprises 621 residues: Chaperone protein HtpG (621 aa).

Residues 1-328 (MTQEKKKFDA…SEDLPLNISR (328 aa)) form an a; substrate-binding region. Positions 329–544 (ESLQHNSVLE…DSAMDIRMER (216 aa)) are b. Positions 475 to 495 (SDIDVEQTTSQSEDKNTHSKK) are disordered. Basic and acidic residues predominate over residues 486-495 (SEDKNTHSKK). Positions 545–621 (FLIEQKQITA…LNDIVQKAIL (77 aa)) are c.

It belongs to the heat shock protein 90 family. Homodimer.

The protein resides in the cytoplasm. In terms of biological role, molecular chaperone. Has ATPase activity. The chain is Chaperone protein HtpG from Rickettsia akari (strain Hartford).